A 420-amino-acid polypeptide reads, in one-letter code: uncharacterized protein (420 aa).

The region spanning 7-65 is the TRAM domain; that stretch reads NIERGSVINVEILNAAHGGQGIAKYDGRVIFVKGAFPGDRLSANITHVKKKFARATIAS. S-adenosyl-L-methionine contacts are provided by Gln-245, Tyr-280, Glu-304, and Asp-349. The active-site Nucleophile is Cys-376.

The protein belongs to the class I-like SAM-binding methyltransferase superfamily. RNA M5U methyltransferase family.

This is an uncharacterized protein from Corynebacterium diphtheriae (strain ATCC 700971 / NCTC 13129 / Biotype gravis).